The primary structure comprises 413 residues: THAP domain-containing protein 5 (413 aa).

The segment at 1–85 (MPRYCAASYC…LKHTAVPTIF (85 aa)) adopts a THAP-type zinc-finger fold. The tract at residues 84-118 (IFSSPDDEEKGSSQNSPQEIRREDQEETTKNVESK) is disordered. Residues 102–118 (EIRREDQEETTKNVESK) are compositionally biased toward basic and acidic residues. A coiled-coil region spans residues 375 to 399 (RLRSLEALIGQLKQENLLSEEKLKI).

The protein resides in the nucleus. The chain is THAP domain-containing protein 5 (THAP5) from Gallus gallus (Chicken).